The primary structure comprises 639 residues: MSQDNEYGAGQIQVLEGLEAVRKRPAMYIGSTDSRGLHHLVYEVVDNSIDEALAGHCDAIEVALHEDGSVSVTDNGRGIPVDTHEQYDRPALEVIMTVLHAGGKFDNKSYQVSGGLHGVGVSVVNALSSELEVEVKRDGAVWTHRFEVGEPQVEEFERVRDLEPGEDTGTTIRFWPDDGIFETTEFDFKTLENRLRELAFLNSGVEISLSDERTDESSTFLFEGGIREFVEYLNETKTALHDDVIYYDDESEGIEVEIAMQATDELQGSIHAFANNINTREGGTHLTGFKTALTRVVNDYANSHDMLDDLDGDNLRGEDVREGLTAVISVKHPDPQFEGQTKTKLGNSEVRGIVESVTHQQLGTFFEENPDTATAIISKAVEAARARKAAKQAEELTRRKSALESTSLPGKLADCQSRDPSESELFIVEGDSAGGSAKQGRDRKFQAILPLKGKILNVEKHRLDRILENDEIRALITAIGGGVGDEFDIEKARYQRLILMTDADVDGAHIRTLLLTLLYRHMRPLIEAGYVYAAQPPLYRVRYRGNTYDAMDEAERDRIIEEECNGNPTQVQRFKGLGEMNPDQLWDTTMNPENRVLKRITVEDAAAADRMFNILMGDAVGPRKQFIKDHANDAEWVDI.

Positions 392–402 are enriched in basic and acidic residues; that stretch reads QAEELTRRKSA. Residues 392 to 417 form a disordered region; that stretch reads QAEELTRRKSALESTSLPGKLADCQS. One can recognise a Toprim domain in the interval 423-537; it reads SELFIVEGDS…AGYVYAAQPP (115 aa). Mg(2+) is bound by residues glutamate 429, aspartate 502, and aspartate 504.

Belongs to the type II topoisomerase GyrB family. Heterotetramer, composed of two GyrA and two GyrB chains. In the heterotetramer, GyrA contains the active site tyrosine that forms a transient covalent intermediate with DNA, while GyrB binds cofactors and catalyzes ATP hydrolysis. It depends on Mg(2+) as a cofactor. Mn(2+) serves as cofactor. Ca(2+) is required as a cofactor.

The protein localises to the cytoplasm. It carries out the reaction ATP-dependent breakage, passage and rejoining of double-stranded DNA.. In terms of biological role, a type II topoisomerase that negatively supercoils closed circular double-stranded (ds) DNA in an ATP-dependent manner to modulate DNA topology and maintain chromosomes in an underwound state. Negative supercoiling favors strand separation, and DNA replication, transcription, recombination and repair, all of which involve strand separation. Also able to catalyze the interconversion of other topological isomers of dsDNA rings, including catenanes and knotted rings. Type II topoisomerases break and join 2 DNA strands simultaneously in an ATP-dependent manner. This Haloferax lucentense (strain DSM 14919 / JCM 9276 / NCIMB 13854 / Aa 2.2) (Haloferax alicantei) protein is DNA gyrase subunit B.